Reading from the N-terminus, the 406-residue chain is Succinylornithine transaminase (406 aa).

Lysine 252 bears the N6-(pyridoxal phosphate)lysine mark.

It belongs to the class-III pyridoxal-phosphate-dependent aminotransferase family. AstC subfamily. Pyridoxal 5'-phosphate serves as cofactor.

The enzyme catalyses N(2)-succinyl-L-ornithine + 2-oxoglutarate = N-succinyl-L-glutamate 5-semialdehyde + L-glutamate. Its pathway is amino-acid degradation; L-arginine degradation via AST pathway; L-glutamate and succinate from L-arginine: step 3/5. Catalyzes the transamination of N(2)-succinylornithine and alpha-ketoglutarate into N(2)-succinylglutamate semialdehyde and glutamate. Can also act as an acetylornithine aminotransferase. This Escherichia coli O7:K1 (strain IAI39 / ExPEC) protein is Succinylornithine transaminase.